Consider the following 178-residue polypeptide: Protein GrpE (178 aa).

The segment covering 1-11 has biased composition (basic and acidic residues); the sequence is MADELSEKSVE. The disordered stretch occupies residues 1 to 32; it reads MADELSEKSVEGTEEDGESAPAEGTTEGVPVD.

The protein belongs to the GrpE family. Homodimer.

Its subcellular location is the cytoplasm. In terms of biological role, participates actively in the response to hyperosmotic and heat shock by preventing the aggregation of stress-denatured proteins, in association with DnaK and GrpE. It is the nucleotide exchange factor for DnaK and may function as a thermosensor. Unfolded proteins bind initially to DnaJ; upon interaction with the DnaJ-bound protein, DnaK hydrolyzes its bound ATP, resulting in the formation of a stable complex. GrpE releases ADP from DnaK; ATP binding to DnaK triggers the release of the substrate protein, thus completing the reaction cycle. Several rounds of ATP-dependent interactions between DnaJ, DnaK and GrpE are required for fully efficient folding. This chain is Protein GrpE, found in Methanothrix thermoacetophila (strain DSM 6194 / JCM 14653 / NBRC 101360 / PT) (Methanosaeta thermophila).